We begin with the raw amino-acid sequence, 319 residues long: Myoblast determination protein 1 (319 aa).

Residue methionine 1 forms a Peptide (Met-Gly) (interchain with G-Cter in ubiquitin) linkage. An N6-methyllysine; by EHMT2 modification is found at lysine 104. A bHLH domain is found at aspartate 109–leucine 160. Disordered regions lie at residues alanine 174 to arginine 222 and proline 267 to leucine 319. The span at serine 197 to serine 207 shows a compositional bias: polar residues. The span at proline 267–proline 276 shows a compositional bias: low complexity.

As to quaternary structure, efficient DNA binding requires dimerization with another bHLH protein. Seems to form active heterodimers with ITF-2. Interacts with SUV39H1. Interacts with DDX5. Interacts with CHD2. Interacts with TSC22D3. Interacts with SETD3. Interacts with P-TEFB complex; promotes the transcriptional activity of MYOD1 through its CDK9-mediated phosphorylation. Interacts with CSRP3. Interacts with NUPR1. In terms of processing, phosphorylated by CDK9. This phosphorylation promotes its function in muscle differentiation. Post-translationally, acetylated by a complex containing EP300 and PCAF. The acetylation is essential to activate target genes. Conversely, its deacetylation by SIRT1 inhibits its function. Ubiquitinated on the N-terminus; which is required for proteasomal degradation. In terms of processing, methylation at Lys-104 by EHMT2/G9a inhibits myogenic activity.

It is found in the nucleus. Its function is as follows. Acts as a transcriptional activator that promotes transcription of muscle-specific target genes and plays a role in muscle differentiation. Together with MYF5 and MYOG, co-occupies muscle-specific gene promoter core region during myogenesis. Induces fibroblasts to differentiate into myoblasts. Interacts with and is inhibited by the twist protein. This interaction probably involves the basic domains of both proteins. The polypeptide is Myoblast determination protein 1 (MYOD1) (Ovis aries (Sheep)).